The sequence spans 446 residues: Alpha-galacturonidase (446 aa).

10-72 (IKIAYIGGGS…GRWRYEAVST (63 aa)) serves as a coordination point for NAD(+). Residue Asn-151 participates in substrate binding. Position 173 (Cys-173) interacts with Mn(2+). His-174 serves as the catalytic Proton donor. His-210 lines the Mn(2+) pocket.

Belongs to the glycosyl hydrolase 4 family. As to quaternary structure, homotetramer. NAD(+) serves as cofactor. Requires Mn(2+) as cofactor.

The enzyme catalyses [(1-&gt;4)-alpha-D-galacturonosyl](n) + H2O = alpha-D-galacturonate + [(1-&gt;4)-alpha-D-galacturonosyl](n-1). Functionally, alpha-galacturonidase able to catalyze the hydrolysis of the chromogenic substrate p-nitrophenyl-alpha-D-galacturonic acid (pNPalphaGalUA), and of the probable natural substrate alpha-1,4-di-galacturonate (GalUA(2)). Can neither hydrolyze pNPbetaGalUA, nor the stereoisomeric pNPalphaGlcUA. Does not display alpha- or beta-glucosidase activity as it fails to hydrolyze melibiose, raffinose, lactose and the chromogenic analogs, pNPalphaGal and pNPbetaGal. Cannot use the following compounds as substrates: pNP-N-acetyl-alpha- and beta-D-galactosaminide, pNP-N-acetyl-alpha- and beta-D-glucosaminide, pNP-alpha-L- and beta-L-arabinopyranoside, pNP-alpha- and beta-D-glucuronide, pNP-alpha- and beta-D-glucopyranoside, pNP-alpha- and beta-D-glucopyranoside 6-phosphate, pNP-alpha-D-galactopyranoside 6-phosphate and oNP-beta-D-galactopyranoside 6-phosphate. The protein is Alpha-galacturonidase (lplD) of Bacillus subtilis (strain 168).